Reading from the N-terminus, the 288-residue chain is Oxaloacetate decarboxylase (288 aa).

Substrate is bound at residue Ser47. Residue Asp85 coordinates Mg(2+). Arg156 and His232 together coordinate substrate.

It belongs to the isocitrate lyase/PEP mutase superfamily. Oxaloacetate decarboxylase family. As to quaternary structure, homotetramer; dimer of dimers. It depends on Mg(2+) as a cofactor.

It catalyses the reaction oxaloacetate + H(+) = pyruvate + CO2. In terms of biological role, catalyzes the decarboxylation of oxaloacetate into pyruvate. Seems to play a role in maintaining cellular concentrations of bicarbonate and pyruvate. This chain is Oxaloacetate decarboxylase, found in Rhodopseudomonas palustris (strain TIE-1).